Here is a 336-residue protein sequence, read N- to C-terminus: Deoxyhypusine hydroxylase (336 aa).

HEAT-like PBS-type repeat units lie at residues 68-94 (LKHE…VVQD) and 101-127 (CRHE…LRDN). Residues H70, E71, H103, and E104 each contribute to the Fe cation site. Positions 158–179 (LKPSDFTSIDPAPPMPLTAKEP) are disordered. HEAT-like PBS-type repeat units lie at residues 235 to 261 (FRHE…TLSD) and 268 to 295 (VRHE…FLND). Positions 237, 238, 270, and 271 each coordinate Fe cation.

Belongs to the deoxyhypusine hydroxylase family. Fe(2+) is required as a cofactor.

The protein localises to the cytoplasm. Its subcellular location is the nucleus. The catalysed reaction is [eIF5A protein]-deoxyhypusine + AH2 + O2 = [eIF5A protein]-hypusine + A + H2O. Its pathway is protein modification; eIF5A hypusination. Its function is as follows. Catalyzes the hydroxylation of the N(6)-(4-aminobutyl)-L-lysine intermediate to form hypusine, an essential post-translational modification only found in mature eIF-5A factor. The chain is Deoxyhypusine hydroxylase (lia1) from Emericella nidulans (strain FGSC A4 / ATCC 38163 / CBS 112.46 / NRRL 194 / M139) (Aspergillus nidulans).